The chain runs to 178 residues: Large ribosomal subunit protein uL6 (178 aa).

Belongs to the universal ribosomal protein uL6 family. As to quaternary structure, part of the 50S ribosomal subunit.

Functionally, this protein binds to the 23S rRNA, and is important in its secondary structure. It is located near the subunit interface in the base of the L7/L12 stalk, and near the tRNA binding site of the peptidyltransferase center. This Methanobrevibacter smithii (strain ATCC 35061 / DSM 861 / OCM 144 / PS) protein is Large ribosomal subunit protein uL6.